Consider the following 404-residue polypeptide: Cysteine desulfurase IscS (404 aa).

Residues 85–86, Asn-165, Gln-193, 213–215, and Thr-251 contribute to the pyridoxal 5'-phosphate site; these read GT and SGH. Cys-338 functions as the Cysteine persulfide intermediate in the catalytic mechanism. A [2Fe-2S] cluster-binding site is contributed by Cys-338.

It belongs to the class-V pyridoxal-phosphate-dependent aminotransferase family. NifS/IscS subfamily. Homodimer. Forms a heterotetramer with IscU, interacts with other sulfur acceptors. It depends on pyridoxal 5'-phosphate as a cofactor.

It localises to the cytoplasm. The enzyme catalyses (sulfur carrier)-H + L-cysteine = (sulfur carrier)-SH + L-alanine. The protein operates within cofactor biosynthesis; iron-sulfur cluster biosynthesis. Master enzyme that delivers sulfur to a number of partners involved in Fe-S cluster assembly, tRNA modification or cofactor biosynthesis. Catalyzes the removal of elemental sulfur atoms from cysteine to produce alanine. Functions as a sulfur delivery protein for Fe-S cluster synthesis onto IscU, an Fe-S scaffold assembly protein, as well as other S acceptor proteins. This chain is Cysteine desulfurase IscS, found in Methanosarcina thermophila.